We begin with the raw amino-acid sequence, 938 residues long: Isoleucine--tRNA ligase (938 aa).

Residues 58–68 carry the 'HIGH' region motif; it reads PYANGSIHIGH. E561 is a binding site for L-isoleucyl-5'-AMP. A 'KMSKS' region motif is present at residues 602–606; sequence KMSKS. ATP is bound at residue K605. Residues C901, C904, C921, and C924 each coordinate Zn(2+).

The protein belongs to the class-I aminoacyl-tRNA synthetase family. IleS type 1 subfamily. In terms of assembly, monomer. Requires Zn(2+) as cofactor.

The protein localises to the cytoplasm. The catalysed reaction is tRNA(Ile) + L-isoleucine + ATP = L-isoleucyl-tRNA(Ile) + AMP + diphosphate. Catalyzes the attachment of isoleucine to tRNA(Ile). As IleRS can inadvertently accommodate and process structurally similar amino acids such as valine, to avoid such errors it has two additional distinct tRNA(Ile)-dependent editing activities. One activity is designated as 'pretransfer' editing and involves the hydrolysis of activated Val-AMP. The other activity is designated 'posttransfer' editing and involves deacylation of mischarged Val-tRNA(Ile). In Erwinia tasmaniensis (strain DSM 17950 / CFBP 7177 / CIP 109463 / NCPPB 4357 / Et1/99), this protein is Isoleucine--tRNA ligase.